The chain runs to 257 residues: UPF0246 protein RHOS4_29700 (257 aa).

It belongs to the UPF0246 family.

The polypeptide is UPF0246 protein RHOS4_29700 (Cereibacter sphaeroides (strain ATCC 17023 / DSM 158 / JCM 6121 / CCUG 31486 / LMG 2827 / NBRC 12203 / NCIMB 8253 / ATH 2.4.1.) (Rhodobacter sphaeroides)).